Reading from the N-terminus, the 90-residue chain is MNKNIDTVREIITVASILIKFSREDIVENRANFIAFLNEIGVTHEGRKLNQNSFRKIVSELTQEDKKTLIDEFNEGFEGVYRYLEMYTNK.

Interacts with the host sigma factor RpoD, and thereby inhibits its interaction with the catalytic core of the host RNA polymerase.

Functionally, transcriptional inhibitor. Inhibits sigma 70-directed transcription by weakening its interaction with the core of the host's RNA polymerase. This allows Gp55 to successfully compete for the core enzyme. Plays an important role during the prereplicative period of phage T4 development. This is 10 kDa anti-sigma factor (asiA) from Enterobacteria phage T4 (Bacteriophage T4).